The following is a 410-amino-acid chain: LL-diaminopimelate aminotransferase (410 aa).

2 residues coordinate substrate: tyrosine 15 and glycine 42. Pyridoxal 5'-phosphate-binding positions include tyrosine 72, 108–109 (AK), tyrosine 132, asparagine 187, tyrosine 218, and 246–248 (SFS). 3 residues coordinate substrate: lysine 109, tyrosine 132, and asparagine 187. An N6-(pyridoxal phosphate)lysine modification is found at lysine 249. 2 residues coordinate pyridoxal 5'-phosphate: arginine 257 and asparagine 292. Substrate contacts are provided by asparagine 292 and arginine 388.

It belongs to the class-I pyridoxal-phosphate-dependent aminotransferase family. LL-diaminopimelate aminotransferase subfamily. In terms of assembly, homodimer. Pyridoxal 5'-phosphate is required as a cofactor.

The enzyme catalyses (2S,6S)-2,6-diaminopimelate + 2-oxoglutarate = (S)-2,3,4,5-tetrahydrodipicolinate + L-glutamate + H2O + H(+). It participates in amino-acid biosynthesis; L-lysine biosynthesis via DAP pathway; LL-2,6-diaminopimelate from (S)-tetrahydrodipicolinate (aminotransferase route): step 1/1. Involved in the synthesis of meso-diaminopimelate (m-DAP or DL-DAP), required for both lysine and peptidoglycan biosynthesis. Catalyzes the direct conversion of tetrahydrodipicolinate to LL-diaminopimelate. This Picosynechococcus sp. (strain ATCC 27264 / PCC 7002 / PR-6) (Agmenellum quadruplicatum) protein is LL-diaminopimelate aminotransferase.